A 548-amino-acid polypeptide reads, in one-letter code: Chaperonin GroEL (548 aa).

ATP is bound by residues 30-33 (TLGP), lysine 51, 87-91 (DGTTT), glycine 415, and aspartate 495.

This sequence belongs to the chaperonin (HSP60) family. In terms of assembly, forms a cylinder of 14 subunits composed of two heptameric rings stacked back-to-back. Interacts with the co-chaperonin GroES.

Its subcellular location is the cytoplasm. It catalyses the reaction ATP + H2O + a folded polypeptide = ADP + phosphate + an unfolded polypeptide.. Together with its co-chaperonin GroES, plays an essential role in assisting protein folding. The GroEL-GroES system forms a nano-cage that allows encapsulation of the non-native substrate proteins and provides a physical environment optimized to promote and accelerate protein folding. The polypeptide is Chaperonin GroEL (Pseudoalteromonas atlantica (strain T6c / ATCC BAA-1087)).